Here is a 243-residue protein sequence, read N- to C-terminus: Carboxy-S-adenosyl-L-methionine synthase (243 aa).

S-adenosyl-L-methionine-binding positions include tyrosine 39, glycine 64–serine 66, aspartate 90–asparagine 91, aspartate 118–leucine 119, asparagine 133, and arginine 200.

It belongs to the class I-like SAM-binding methyltransferase superfamily. Cx-SAM synthase family. In terms of assembly, homodimer.

The enzyme catalyses prephenate + S-adenosyl-L-methionine = carboxy-S-adenosyl-L-methionine + 3-phenylpyruvate + H2O. Its function is as follows. Catalyzes the conversion of S-adenosyl-L-methionine (SAM) to carboxy-S-adenosyl-L-methionine (Cx-SAM). The sequence is that of Carboxy-S-adenosyl-L-methionine synthase from Idiomarina loihiensis (strain ATCC BAA-735 / DSM 15497 / L2-TR).